The following is a 158-amino-acid chain: Transcription factor bHLH146 (158 aa).

The segment covering 77 to 90 has biased composition (low complexity); sequence SSSSNPTTTTSSSS. Residues 77 to 110 form a disordered region; it reads SSSSNPTTTTSSSSDGIRILERPDKEGGNEEGGI. Residues 94–110 show a composition bias toward basic and acidic residues; that stretch reads RILERPDKEGGNEEGGI. The bHLH; atypical domain maps to 94 to 143; that stretch reads RILERPDKEGGNEEGGIEERLRELKKLLPGGEEMNVEEMLSEIGNYIKCL.

Belongs to the bHLH protein family.

The protein resides in the nucleus. The chain is Transcription factor bHLH146 (BHLH146) from Arabidopsis thaliana (Mouse-ear cress).